We begin with the raw amino-acid sequence, 422 residues long: Tryptophan synthase beta chain 1 (422 aa).

Lys107 bears the N6-(pyridoxal phosphate)lysine mark.

It belongs to the TrpB family. As to quaternary structure, tetramer of two alpha and two beta chains. Requires pyridoxal 5'-phosphate as cofactor.

It catalyses the reaction (1S,2R)-1-C-(indol-3-yl)glycerol 3-phosphate + L-serine = D-glyceraldehyde 3-phosphate + L-tryptophan + H2O. It functions in the pathway amino-acid biosynthesis; L-tryptophan biosynthesis; L-tryptophan from chorismate: step 5/5. The beta subunit is responsible for the synthesis of L-tryptophan from indole and L-serine. The sequence is that of Tryptophan synthase beta chain 1 (trpB1) from Sulfurisphaera tokodaii (strain DSM 16993 / JCM 10545 / NBRC 100140 / 7) (Sulfolobus tokodaii).